The chain runs to 451 residues: Phosphoglucosamine mutase (451 aa).

S101 serves as the catalytic Phosphoserine intermediate. The Mg(2+) site is built by S101, D240, D242, and D244. A Phosphoserine modification is found at S101.

It belongs to the phosphohexose mutase family. Mg(2+) serves as cofactor. Activated by phosphorylation.

The catalysed reaction is alpha-D-glucosamine 1-phosphate = D-glucosamine 6-phosphate. Its function is as follows. Catalyzes the conversion of glucosamine-6-phosphate to glucosamine-1-phosphate. In Streptococcus pyogenes serotype M1, this protein is Phosphoglucosamine mutase.